The following is a 58-amino-acid chain: Small ribosomal subunit protein bS21 (58 aa).

Residues 24-58 (TKAGTLQEARKREHYEKPSVKRKRKSEAARKRKKI) are disordered. The span at 31–42 (EARKREHYEKPS) shows a compositional bias: basic and acidic residues. Basic residues predominate over residues 43–58 (VKRKRKSEAARKRKKI).

It belongs to the bacterial ribosomal protein bS21 family.

This chain is Small ribosomal subunit protein bS21, found in Streptococcus thermophilus (strain CNRZ 1066).